Reading from the N-terminus, the 263-residue chain is Small ribosomal subunit protein uS2 (263 aa).

The protein belongs to the universal ribosomal protein uS2 family. As to quaternary structure, component of the small ribosomal subunit. Mature ribosomes consist of a small (40S) and a large (60S) subunit. The 40S subunit contains about 33 different proteins and 1 molecule of RNA (18S). The 60S subunit contains about 49 different proteins and 3 molecules of RNA (25S, 5.8S and 5S). Interacts with RPS21.

It localises to the cytoplasm. Its function is as follows. Required for the assembly and/or stability of the 40S ribosomal subunit. Required for the processing of the 20S rRNA-precursor to mature 18S rRNA in a late step of the maturation of 40S ribosomal subunits. The polypeptide is Small ribosomal subunit protein uS2 (Vairimorpha ceranae (strain BRL01) (Microsporidian parasite)).